Consider the following 652-residue polypeptide: DNA ligase (652 aa).

Residues 29-33, 78-79, and Glu107 contribute to the NAD(+) site; these read DSDYD and SL. The N6-AMP-lysine intermediate role is filled by Lys109. Positions 130, 164, 278, and 302 each coordinate NAD(+). Zn(2+) is bound by residues Cys395, Cys398, Cys413, and Cys418. The region spanning 577–652 is the BRCT domain; sequence NSDAALFGLT…IEDEDWLRQL (76 aa).

Belongs to the NAD-dependent DNA ligase family. LigA subfamily. Requires Mg(2+) as cofactor. Mn(2+) is required as a cofactor.

The enzyme catalyses NAD(+) + (deoxyribonucleotide)n-3'-hydroxyl + 5'-phospho-(deoxyribonucleotide)m = (deoxyribonucleotide)n+m + AMP + beta-nicotinamide D-nucleotide.. Functionally, DNA ligase that catalyzes the formation of phosphodiester linkages between 5'-phosphoryl and 3'-hydroxyl groups in double-stranded DNA using NAD as a coenzyme and as the energy source for the reaction. It is essential for DNA replication and repair of damaged DNA. The protein is DNA ligase of Streptococcus pyogenes serotype M1.